The sequence spans 409 residues: Pyruvate dehydrogenase E1 component subunit alpha, mitochondrial (409 aa).

The residue at position 6 (T6) is a Phosphothreonine. Residues H109, Y135, R136, A174, G182, V184, D213, G214, A215, N242, and Y244 each contribute to the pyruvate site. 2 residues coordinate thiamine diphosphate: Y135 and R136. Thiamine diphosphate-binding residues include G182, V184, D213, G214, A215, and N242. D213 serves as a coordination point for Mg(2+). 2 residues coordinate Mg(2+): N242 and Y244. Phosphotyrosine is present on Y306. H309 is a thiamine diphosphate binding site. A phosphoserine mark is found at S310 and S312.

Tetramer of 2 alpha and 2 beta subunits. The cofactor is thiamine diphosphate. Mg(2+) is required as a cofactor.

It localises to the mitochondrion matrix. It catalyses the reaction N(6)-[(R)-lipoyl]-L-lysyl-[protein] + pyruvate + H(+) = N(6)-[(R)-S(8)-acetyldihydrolipoyl]-L-lysyl-[protein] + CO2. Its activity is regulated as follows. E1 activity is regulated by phosphorylation (inactivation) and dephosphorylation (activation) of the alpha subunit. Its function is as follows. The pyruvate dehydrogenase complex catalyzes the overall conversion of pyruvate to acetyl-CoA and CO(2). It contains multiple copies of three enzymatic components: pyruvate dehydrogenase (E1), dihydrolipoamide acetyltransferase (E2) and lipoamide dehydrogenase (E3). In Schizosaccharomyces pombe (strain 972 / ATCC 24843) (Fission yeast), this protein is Pyruvate dehydrogenase E1 component subunit alpha, mitochondrial (pda1).